Reading from the N-terminus, the 65-residue chain is Small ribosomal subunit protein bS21B (65 aa).

The protein belongs to the bacterial ribosomal protein bS21 family.

The chain is Small ribosomal subunit protein bS21B from Francisella tularensis subsp. holarctica (strain LVS).